A 297-amino-acid chain; its full sequence is Ribosomal RNA small subunit methyltransferase A (297 aa).

The S-adenosyl-L-methionine site is built by asparagine 31, leucine 33, glycine 58, glutamate 79, aspartate 104, and asparagine 129.

It belongs to the class I-like SAM-binding methyltransferase superfamily. rRNA adenine N(6)-methyltransferase family. RsmA subfamily.

It localises to the cytoplasm. The enzyme catalyses adenosine(1518)/adenosine(1519) in 16S rRNA + 4 S-adenosyl-L-methionine = N(6)-dimethyladenosine(1518)/N(6)-dimethyladenosine(1519) in 16S rRNA + 4 S-adenosyl-L-homocysteine + 4 H(+). Its function is as follows. Specifically dimethylates two adjacent adenosines (A1518 and A1519) in the loop of a conserved hairpin near the 3'-end of 16S rRNA in the 30S particle. May play a critical role in biogenesis of 30S subunits. The chain is Ribosomal RNA small subunit methyltransferase A from Staphylococcus aureus (strain Mu3 / ATCC 700698).